The primary structure comprises 142 residues: NADH-quinone oxidoreductase subunit A (142 aa).

Transmembrane regions (helical) follow at residues 8–28, 63–83, and 93–113; these read FGTV…GYLT, FYVV…LFPW, and FALI…VYAW.

The protein belongs to the complex I subunit 3 family. NDH-1 is composed of 14 different subunits. Subunits NuoA, H, J, K, L, M, N constitute the membrane sector of the complex.

The protein resides in the cell inner membrane. It catalyses the reaction a quinone + NADH + 5 H(+)(in) = a quinol + NAD(+) + 4 H(+)(out). Functionally, NDH-1 shuttles electrons from NADH, via FMN and iron-sulfur (Fe-S) centers, to quinones in the respiratory chain. The immediate electron acceptor for the enzyme in this species is believed to be a menaquinone. Couples the redox reaction to proton translocation (for every two electrons transferred, four hydrogen ions are translocated across the cytoplasmic membrane), and thus conserves the redox energy in a proton gradient. This chain is NADH-quinone oxidoreductase subunit A, found in Chlorobium phaeobacteroides (strain BS1).